Reading from the N-terminus, the 154-residue chain is Ribosomal RNA large subunit methyltransferase H (154 aa).

Residues L76, G103, and 122–127 (LSPLTL) contribute to the S-adenosyl-L-methionine site.

It belongs to the RNA methyltransferase RlmH family. In terms of assembly, homodimer.

The protein localises to the cytoplasm. It carries out the reaction pseudouridine(1915) in 23S rRNA + S-adenosyl-L-methionine = N(3)-methylpseudouridine(1915) in 23S rRNA + S-adenosyl-L-homocysteine + H(+). In terms of biological role, specifically methylates the pseudouridine at position 1915 (m3Psi1915) in 23S rRNA. This is Ribosomal RNA large subunit methyltransferase H from Wolinella succinogenes (strain ATCC 29543 / DSM 1740 / CCUG 13145 / JCM 31913 / LMG 7466 / NCTC 11488 / FDC 602W) (Vibrio succinogenes).